Reading from the N-terminus, the 364-residue chain is 3-methyl-2-oxobutanoate hydroxymethyltransferase 1, mitochondrial (364 aa).

A mitochondrion-targeting transit peptide spans 1 to 59 (MMMMMRRAFRHLARQQRRPLSHVPESAVYGGPRPQDVGAAAGAGAGAGATRRVTVTTLR). D94 and D133 together coordinate Mg(2+). 3-methyl-2-oxobutanoate-binding positions include 94–95 (DS), D133, and K163. E165 is a binding site for Mg(2+). E233 functions as the Proton acceptor in the catalytic mechanism.

It belongs to the PanB family. Mg(2+) is required as a cofactor.

It localises to the mitochondrion. The enzyme catalyses 3-methyl-2-oxobutanoate + (6R)-5,10-methylene-5,6,7,8-tetrahydrofolate + H2O = 2-dehydropantoate + (6S)-5,6,7,8-tetrahydrofolate. It functions in the pathway cofactor biosynthesis; (R)-pantothenate biosynthesis; (R)-pantoate from 3-methyl-2-oxobutanoate: step 1/2. Catalyzes the reversible reaction in which hydroxymethyl group from 5,10-methylenetetrahydrofolate is transferred onto alpha-ketoisovalerate to form ketopantoate. This is 3-methyl-2-oxobutanoate hydroxymethyltransferase 1, mitochondrial (KPHMT1) from Oryza sativa subsp. japonica (Rice).